A 53-amino-acid chain; its full sequence is UPF0391 membrane protein PC1_0455 (53 aa).

The next 2 helical transmembrane spans lie at 4-24 (WGII…GGLA) and 30-47 (AAKI…LSLF).

It belongs to the UPF0391 family.

The protein localises to the cell membrane. The chain is UPF0391 membrane protein PC1_0455 from Pectobacterium carotovorum subsp. carotovorum (strain PC1).